Consider the following 838-residue polypeptide: Calmodulin-binding transcription activator 6 (838 aa).

The segment at residues 25–134 (VQTMLEEAKS…YRDTQEAATT (110 aa)) is a DNA-binding region (CG-1). The ANK repeat unit spans residues 525-554 (QGWTALHWAAYYGREKMVAALLSAGARPNL). IQ domains follow at residues 671–700 (SIIAAMKIQNAFRKYDTRRKIEAAYRIQCR), 713–742 (MRRQAIRIQAAFRGLQARRQYKKILWSVGV), and 788–817 (LERSVVRVQAMFRSKKAQQDYRRMKLTHEE). Residues 738–760 (WSVGVLEKAVLRWRQKRKGFRGL) are calmodulin-binding. Residues 802–822 (KKAQQDYRRMKLTHEEAQVNH) adopt a coiled-coil conformation.

This sequence belongs to the CAMTA family. In terms of tissue distribution, expressed in roots, stems, leaves, sepals, petals, stamen filaments, top of carpels, anthers and siliques, but not in stigmas.

Its subcellular location is the nucleus. Transcription activator that binds calmodulin in a calcium-dependent manner in vitro. Binds to the DNA consensus sequence 5'-[ACG]CGCG[GTC]-3'. Regulates transcriptional activity in response to calcium signals. This is Calmodulin-binding transcription activator 6 from Arabidopsis thaliana (Mouse-ear cress).